Here is a 365-residue protein sequence, read N- to C-terminus: MVLAKQWVLKNLPTPGEPFNFHFHDPACTFELIEKELSSEQLKDGELLLETTYLSNDPAQKFWISSMDKNYAKGVQPGEIIPARGIGKVLASRNKAFSPGDYVSAVTGWTTHAIISQENVQGLRKLDKNKVGKLWWYLSVLGGTSLTAYFIFFTYAQLQEREEDYGKVYLISGAAGAVGTVCIQLALNVFKASKVIAIAGGPEKVAFVESFGDNVVGVDYKDPSFKQKLIEAAGGENTVDYFIDNVGSNVLEAGVLLLKQRAMLIACGAISAYNDPSKFVFKGYSFILTKRLVVKGVLVTDNIDDFPKALDKLGSLVKHGKIDLLKSATLEDGTGDKFKNVPLIWKGLFSGVNKGKLITKVNNEE.

Residues 1–133 lie on the Cytoplasmic side of the membrane; that stretch reads MVLAKQWVLK…RKLDKNKVGK (133 aa). The helical transmembrane segment at 134 to 154 threads the bilayer; that stretch reads LWWYLSVLGGTSLTAYFIFFT. At 155–169 the chain is on the extracellular side; sequence YAQLQEREEDYGKVY. A helical transmembrane segment spans residues 170–190; the sequence is LISGAAGAVGTVCIQLALNVF. Topologically, residues 191-365 are cytoplasmic; it reads KASKVIAIAG…KLITKVNNEE (175 aa).

The protein localises to the membrane. This is an uncharacterized protein from Saccharomyces cerevisiae (strain ATCC 204508 / S288c) (Baker's yeast).